A 3704-amino-acid polypeptide reads, in one-letter code: Fatty acid synthase 2 (3704 aa).

Positions 27–41 (AVSAHGSPPSSASPG) are enriched in low complexity. The disordered stretch occupies residues 27–52 (AVSAHGSPPSSASPGPDDKAFSVDGT). Residues 216–475 (ALFGGQGNNH…QARIPFSKRK (260 aa)) are acetyltransferase (AT) domain. The segment at 639–887 (SRLLGKPPIM…LIASTQGCSD (249 aa)) is enoyl reductase (ER) domain. The tract at residues 1216-1709 (GEQPSWIRAL…VPGDQLSVQL (494 aa)) is dehydratase (DH) domain. The 107-residue stretch at 1624–1730 (PKTNEPYSRA…VQIDASNQRG (107 aa)) folds into the MaoC-like domain. A malonyl/palmitoyl transferase (MT/PT) domain region spans residues 1747–2112 (YVFTGQGSQA…IEHVSEVTRS (366 aa)). Residues 2265–2343 (DERLDPLLTV…AALRPGYSGE (79 aa)) enclose the Carrier domain. Ser-2303 carries the O-(pantetheine 4'-phosphoryl)serine modification. The ketoreductase (KR) domain stretch occupies residues 2733–2969 (GLDVLLTGVG…LGLVEPEFAS (237 aa)). The Ketosynthase family 3 (KS3) domain occupies 3176 to 3623 (QQEIELTHDL…QVGGIAMILH (448 aa)). Active-site for beta-ketoacyl synthase activity residues include Cys-3359, His-3506, and His-3547.

In the N-terminal section; belongs to the fungal fatty acid synthetase subunit beta family. This sequence in the C-terminal section; belongs to the thiolase-like superfamily. Fungal fatty acid synthetase subunit alpha family.

It functions in the pathway secondary metabolite biosynthesis. Fatty acid synthase; part of the gene cluster that mediates the biosynthesis of the glycolipid biosurfactant ustilagic acid (UA). UA is a secreted cellobiose glycolipid that is toxic for many microorganisms and confers biocontrol activity to U.maydis. UA consists of 15,16-dihydroxypalmitic or 2,15,16-trihydroxypalmitic acid, which is O-glycosidically linked to cellobiose at its terminal hydroxyl group. In addition, the cellobiose moiety is acetylated and acylated with a short-chain hydroxy fatty acid. UA biosynthesis starts with omega-hydroxylation of palmitic acid catalyzed by the cytochrome P450 monooxygenase cyp1. Terminal hydroxylation of palmitic acid precedes subterminal hydroxylation catalyzed by the cytochrome P450 monooxygenase cyp2. Sequential glucosylation of the hydroxy fatty acid is probably catalyzed by the glycosyltransferase ugt1. The cellobiose lipid is further decorated by acetylation of the proximal glucose residue and by acylation with a short-chain beta-hydroxy fatty acid at the distal glucose residue. The acyltransferase uat1 may be a good candidate for catalyzing either acetylation or acylation of the cellobiose lipid. The fatty acid synthase fas2 may be involved in synthesis of the carbon backbone of the short-chain beta-hydroxy fatty acid esterified to the cellobiose disaccharide. The secreted UA consists of a mixture of both alpha-hydroxylated and non-hydroxylated glycolipids; therefore, alpha-hydroxylation of the long-chain fatty, catalyzed by the fatty acid hydroxylase ahd1, occurs late in UA biosynthesis and may be the last step before secretion. This is Fatty acid synthase 2 from Mycosarcoma maydis (Corn smut fungus).